Reading from the N-terminus, the 344-residue chain is Aspartate carbamoyltransferase catalytic subunit (344 aa).

The interval 1–30 is disordered; that stretch reads MPESPPLPKRSPLMTSSTTRPASDYPPGGD. 2 residues coordinate carbamoyl phosphate: R88 and T89. Residue K116 participates in L-aspartate binding. 3 residues coordinate carbamoyl phosphate: R138, H166, and Q169. L-aspartate is bound by residues R199 and R253. Carbamoyl phosphate contacts are provided by G294 and P295.

Belongs to the aspartate/ornithine carbamoyltransferase superfamily. ATCase family. In terms of assembly, heterododecamer (2C3:3R2) of six catalytic PyrB chains organized as two trimers (C3), and six regulatory PyrI chains organized as three dimers (R2).

The catalysed reaction is carbamoyl phosphate + L-aspartate = N-carbamoyl-L-aspartate + phosphate + H(+). Its pathway is pyrimidine metabolism; UMP biosynthesis via de novo pathway; (S)-dihydroorotate from bicarbonate: step 2/3. Its function is as follows. Catalyzes the condensation of carbamoyl phosphate and aspartate to form carbamoyl aspartate and inorganic phosphate, the committed step in the de novo pyrimidine nucleotide biosynthesis pathway. The protein is Aspartate carbamoyltransferase catalytic subunit of Sphingopyxis alaskensis (strain DSM 13593 / LMG 18877 / RB2256) (Sphingomonas alaskensis).